The following is a 561-amino-acid chain: Urocanate hydratase (561 aa).

Residues 52–53 (GG), Q130, 176–178 (GMG), E196, R201, 242–243 (NA), 263–267 (QTSAH), 273–274 (YL), and Y322 contribute to the NAD(+) site. Residue C410 is part of the active site. Position 492 (G492) interacts with NAD(+).

It belongs to the urocanase family. NAD(+) is required as a cofactor.

The protein resides in the cytoplasm. The catalysed reaction is 4-imidazolone-5-propanoate = trans-urocanate + H2O. The protein operates within amino-acid degradation; L-histidine degradation into L-glutamate; N-formimidoyl-L-glutamate from L-histidine: step 2/3. Its function is as follows. Catalyzes the conversion of urocanate to 4-imidazolone-5-propionate. This Salmonella choleraesuis (strain SC-B67) protein is Urocanate hydratase.